Here is a 38-residue protein sequence, read N- to C-terminus: Photosystem II reaction center protein L (38 aa).

Residues 17-37 (SLYWGLLLIFVLAVSFSNYFF) form a helical membrane-spanning segment.

It belongs to the PsbL family. In terms of assembly, PSII is composed of 1 copy each of membrane proteins PsbA, PsbB, PsbC, PsbD, PsbE, PsbF, PsbH, PsbI, PsbJ, PsbK, PsbL, PsbM, PsbT, PsbX, PsbY, PsbZ, Psb30/Ycf12, at least 3 peripheral proteins of the oxygen-evolving complex and a large number of cofactors. It forms dimeric complexes.

It localises to the plastid membrane. Functionally, one of the components of the core complex of photosystem II (PSII). PSII is a light-driven water:plastoquinone oxidoreductase that uses light energy to abstract electrons from H(2)O, generating O(2) and a proton gradient subsequently used for ATP formation. It consists of a core antenna complex that captures photons, and an electron transfer chain that converts photonic excitation into a charge separation. This subunit is found at the monomer-monomer interface and is required for correct PSII assembly and/or dimerization. This Aneura mirabilis (Parasitic liverwort) protein is Photosystem II reaction center protein L.